A 109-amino-acid chain; its full sequence is Small ribosomal subunit protein uS15c (109 aa).

It belongs to the universal ribosomal protein uS15 family. As to quaternary structure, part of the 30S ribosomal subunit.

It localises to the plastid. The protein localises to the chloroplast. This chain is Small ribosomal subunit protein uS15c (rps15-A), found in Trachelium caeruleum (Blue throatwort).